Consider the following 372-residue polypeptide: O-glycoside alpha-1,2-mannosyltransferase homolog 2 (372 aa).

Topologically, residues 1-6 (MRISRL) are cytoplasmic. A helical; Signal-anchor for type II membrane protein transmembrane segment spans residues 7–27 (LIRVLLGFVILFITYILFPSI). At 28-372 (PKALVNTLNV…NLTNEDYDEL (345 aa)) the chain is on the lumenal side. Glu271 (nucleophile) is an active-site residue.

It belongs to the glycosyltransferase 15 family.

The protein resides in the endoplasmic reticulum membrane. Probable mannosyltransferase involved in O-glycosylation of cell wall and secreted proteins. The sequence is that of O-glycoside alpha-1,2-mannosyltransferase homolog 2 (omh2) from Schizosaccharomyces pombe (strain 972 / ATCC 24843) (Fission yeast).